The following is a 91-amino-acid chain: DNA-directed RNA polymerase subunit omega (91 aa).

The tract at residues 66–91 (QMPPPLPNFPGAANREATGAEDAAGE) is disordered.

This sequence belongs to the RNA polymerase subunit omega family. The RNAP catalytic core consists of 2 alpha, 1 beta, 1 beta' and 1 omega subunit. When a sigma factor is associated with the core the holoenzyme is formed, which can initiate transcription.

The catalysed reaction is RNA(n) + a ribonucleoside 5'-triphosphate = RNA(n+1) + diphosphate. Its function is as follows. Promotes RNA polymerase assembly. Latches the N- and C-terminal regions of the beta' subunit thereby facilitating its interaction with the beta and alpha subunits. This Acidithiobacillus ferrooxidans (strain ATCC 23270 / DSM 14882 / CIP 104768 / NCIMB 8455) (Ferrobacillus ferrooxidans (strain ATCC 23270)) protein is DNA-directed RNA polymerase subunit omega.